Reading from the N-terminus, the 50-residue chain is Large ribosomal subunit protein eL40 (50 aa).

Belongs to the eukaryotic ribosomal protein eL40 family.

This is Large ribosomal subunit protein eL40 from Aeropyrum pernix (strain ATCC 700893 / DSM 11879 / JCM 9820 / NBRC 100138 / K1).